Consider the following 276-residue polypeptide: AT-hook motif nuclear-localized protein 17 (276 aa).

Basic and acidic residues predominate over residues 1 to 10; that stretch reads MKGEYREQKS. Disordered stretches follow at residues 1–80 and 212–248; these read MKGE…RDTD and AEEEQKHSAGTGEREGQSPPVSGGGEESGQMAGSGGE. Low complexity-rich tracts occupy residues 20–31 and 40–49; these read HQQQQQQQQQQH and SSTVTPTVDD. A DNA-binding region (a.T hook) is located at residues 56 to 68; the sequence is RRPRGRPPGSKNK. The PPC domain maps to 80 to 230; the sequence is DPPMSPYILE…GTGEREGQSP (151 aa). Over residues 212 to 227 the composition is skewed to basic and acidic residues; that stretch reads AEEEQKHSAGTGEREG. Residues 233–248 show a composition bias toward gly residues; that stretch reads SGGGEESGQMAGSGGE.

Its subcellular location is the nucleus. Functionally, transcription factor that specifically binds AT-rich DNA sequences related to the nuclear matrix attachment regions (MARs). The sequence is that of AT-hook motif nuclear-localized protein 17 from Arabidopsis thaliana (Mouse-ear cress).